The sequence spans 282 residues: Cuticle collagen 8 (282 aa).

An N-terminal signal peptide occupies residues 1–24 (MLVCVFVALYTMMGLLTDIKQLQS). The tract at residues 86 to 282 (GPKSEGCPAG…CPCPGRSYKA (197 aa)) is disordered. Triple-helical region regions lie at residues 95-124 (GPPG…PGVI) and 141-269 (GRPG…PGPD). Gly residues predominate over residues 170-180 (TGGQGGPGEQG). Pro residues predominate over residues 214–224 (PPGPRGPPGPE). A compositionally biased stretch (gly residues) spans 225-234 (GNPGGAGEDG). The span at 235 to 244 (NQGPVGHPGV) shows a compositional bias: low complexity.

The protein belongs to the cuticular collagen family. In terms of assembly, collagen polypeptide chains are complexed within the cuticle by disulfide bonds and other types of covalent cross-links.

Nematode cuticles are composed largely of collagen-like proteins. The cuticle functions both as an exoskeleton and as a barrier to protect the worm from its environment. This Caenorhabditis elegans protein is Cuticle collagen 8 (col-8).